A 514-amino-acid chain; its full sequence is 2-isopropylmalate synthase (514 aa).

The 264-residue stretch at 5 to 268 (LIIFDTTLRD…DVGIDTTQIV (264 aa)) folds into the Pyruvate carboxyltransferase domain. The Mn(2+) site is built by Asp14, His202, His204, and Asn239. The interval 395–514 (KFVSLSQRSE…KDDKLNPQRA (120 aa)) is regulatory domain.

It belongs to the alpha-IPM synthase/homocitrate synthase family. LeuA type 1 subfamily. Homodimer. Requires Mn(2+) as cofactor.

It localises to the cytoplasm. It catalyses the reaction 3-methyl-2-oxobutanoate + acetyl-CoA + H2O = (2S)-2-isopropylmalate + CoA + H(+). It functions in the pathway amino-acid biosynthesis; L-leucine biosynthesis; L-leucine from 3-methyl-2-oxobutanoate: step 1/4. Functionally, catalyzes the condensation of the acetyl group of acetyl-CoA with 3-methyl-2-oxobutanoate (2-ketoisovalerate) to form 3-carboxy-3-hydroxy-4-methylpentanoate (2-isopropylmalate). This chain is 2-isopropylmalate synthase, found in Burkholderia cenocepacia (strain HI2424).